A 180-amino-acid polypeptide reads, in one-letter code: ATP-dependent protease subunit HslV (180 aa).

Threonine 7 is a catalytic residue. Residues glycine 165, cysteine 168, and threonine 171 each contribute to the Na(+) site.

It belongs to the peptidase T1B family. HslV subfamily. A double ring-shaped homohexamer of HslV is capped on each side by a ring-shaped HslU homohexamer. The assembly of the HslU/HslV complex is dependent on binding of ATP.

It localises to the cytoplasm. It carries out the reaction ATP-dependent cleavage of peptide bonds with broad specificity.. Its activity is regulated as follows. Allosterically activated by HslU binding. Its function is as follows. Protease subunit of a proteasome-like degradation complex believed to be a general protein degrading machinery. In Bacillus cytotoxicus (strain DSM 22905 / CIP 110041 / 391-98 / NVH 391-98), this protein is ATP-dependent protease subunit HslV.